The sequence spans 3473 residues: AP2/ERF domain-containing protein PFD0985w (3473 aa).

9 disordered regions span residues 35 to 61 (NNII…NNNN), 366 to 450 (KMER…HLVC), 647 to 704 (NNNN…INAK), 750 to 801 (NIIK…RKKK), 1096 to 1196 (VDNN…MNMN), 1300 to 1328 (DNTS…NSRG), 1388 to 1418 (HLRS…GAER), 1773 to 1807 (NNTG…NNKV), and 1864 to 1898 (IGED…NNLS). Low complexity-rich tracts occupy residues 44-61 (NGHN…NNNN), 396-442 (NNND…NSNN), and 647-666 (NNNN…NNNN). The span at 683 to 694 (TGDKHETSKKED) shows a compositional bias: basic and acidic residues. Positions 751–768 (IIKSDNVNNNNNNNNNNN) are enriched in low complexity. A compositionally biased stretch (basic residues) spans 785–801 (NKKHKKKNIHDNNRKKK). Residues 1098-1156 (NNNNNNNNNNNNNVNNISNNGTNLEENANNANNANNPNNANNPNNANNSNNADYVNDYN) are compositionally biased toward low complexity. Residues 1160-1171 (KEEDDDDEEEDN) show a composition bias toward acidic residues. Residues 1182 to 1196 (TNYNININGENMNMN) are compositionally biased toward low complexity. 2 stretches are compositionally biased toward polar residues: residues 1314–1326 (VGSN…NNNS) and 1390–1412 (RSSN…SSMR). Over residues 1773-1805 (NNTGTTQNNNKYGTNSNNNNNNNNNNNNNNNNN) the composition is skewed to low complexity. A compositionally biased stretch (basic residues) spans 1881 to 1893 (LKRRKNGNSKRAK). Positions 1957–2011 (PLPTGVYFDSARKLWRCQWKENGKFKTKGFSLIHYSTLEEARKQCILYRCDVGNI) form a DNA-binding region, AP2/ERF 1. Disordered regions lie at residues 2068-2088 (EKTG…NVNN), 2319-2343 (QVDV…SNSK), 2387-2470 (TNDN…NIRS), 2520-2584 (LGNG…NYNN), 2609-2677 (LYGK…PASN), 2840-2860 (MNNN…NNVK), 2881-2902 (NDKL…SSSP), and 2937-2960 (KYVE…KKDE). Basic residues predominate over residues 2333 to 2342 (KRSKRSKSNS). 2 stretches are compositionally biased toward low complexity: residues 2388–2400 (NDNN…NNND) and 2409–2460 (DNNN…NNND). Residues 2525–2542 (DGEEEGGGDYDEKEDDLL) show a composition bias toward acidic residues. 2 stretches are compositionally biased toward low complexity: residues 2557-2584 (NNNN…NYNN) and 2615-2624 (NNNNNNNNNN). The span at 2663 to 2675 (LLNSQVNESSAPA) shows a compositional bias: polar residues. Over residues 2841-2858 (NNNNNNNNNNNNNNNNNN) the composition is skewed to low complexity. Basic and acidic residues predominate over residues 2943–2953 (NGDKETNDYNT). The segment at residues 3268–3321 (SLPKGIYYDHAKKLYRVQYIINNSIKTKGFSVKKLGLAQAKIEAESFRNFCLEN) is a DNA-binding region (AP2/ERF 2). The span at 3369–3391 (KMSINNDGNNNDGNNNDGNNNDD) shows a compositional bias: low complexity. A disordered region spans residues 3369–3473 (KMSINNDGNN…NNDNEMSQNE (105 aa)). A compositionally biased stretch (acidic residues) spans 3392-3403 (NNNDDNNNDDNN). Over residues 3404-3457 (NDGNNNDDNNNEGINNDDNNNEGINNDDNNNEGINNNDDNNNNDDNNNEGINND) the composition is skewed to low complexity.

It is found in the nucleus. The sequence is that of AP2/ERF domain-containing protein PFD0985w from Plasmodium falciparum (isolate 3D7).